The following is a 300-amino-acid chain: Sulfate adenylyltransferase subunit 2 (300 aa).

The segment at 281 to 300 is disordered; that stretch reads RAIDRDEAGSMEKKKREGYF.

It belongs to the PAPS reductase family. CysD subfamily. As to quaternary structure, heterodimer composed of CysD, the smaller subunit, and CysN.

It carries out the reaction sulfate + ATP + H(+) = adenosine 5'-phosphosulfate + diphosphate. The protein operates within sulfur metabolism; hydrogen sulfide biosynthesis; sulfite from sulfate: step 1/3. Its function is as follows. With CysN forms the ATP sulfurylase (ATPS) that catalyzes the adenylation of sulfate producing adenosine 5'-phosphosulfate (APS) and diphosphate, the first enzymatic step in sulfur assimilation pathway. APS synthesis involves the formation of a high-energy phosphoric-sulfuric acid anhydride bond driven by GTP hydrolysis by CysN coupled to ATP hydrolysis by CysD. This chain is Sulfate adenylyltransferase subunit 2, found in Brucella canis (strain ATCC 23365 / NCTC 10854 / RM-666).